The sequence spans 684 residues: Probable Xaa-Pro aminopeptidase P (684 aa).

The Mn(2+) site is built by Asp-481, Asp-492, Glu-590, and Glu-604.

It belongs to the peptidase M24B family. It depends on Mn(2+) as a cofactor.

The catalysed reaction is Release of any N-terminal amino acid, including proline, that is linked to proline, even from a dipeptide or tripeptide.. Its function is as follows. Catalyzes the removal of a penultimate prolyl residue from the N-termini of peptides. This is Probable Xaa-Pro aminopeptidase P (ampp) from Neurospora crassa (strain ATCC 24698 / 74-OR23-1A / CBS 708.71 / DSM 1257 / FGSC 987).